A 240-amino-acid chain; its full sequence is Uridylate kinase (240 aa).

Residue 13-16 (KFSG) participates in ATP binding. Glycine 55 is a UMP binding site. 2 residues coordinate ATP: glycine 56 and arginine 60. Residues aspartate 76 and 137–144 (TGNPFFTT) each bind UMP. ATP contacts are provided by threonine 164, tyrosine 170, and aspartate 173.

It belongs to the UMP kinase family. As to quaternary structure, homohexamer.

The protein localises to the cytoplasm. It catalyses the reaction UMP + ATP = UDP + ADP. It participates in pyrimidine metabolism; CTP biosynthesis via de novo pathway; UDP from UMP (UMPK route): step 1/1. With respect to regulation, inhibited by UTP. Functionally, catalyzes the reversible phosphorylation of UMP to UDP. In Helicobacter pylori (strain ATCC 700392 / 26695) (Campylobacter pylori), this protein is Uridylate kinase.